The primary structure comprises 177 residues: Large ribosomal subunit protein uL6 (177 aa).

Belongs to the universal ribosomal protein uL6 family. In terms of assembly, part of the 50S ribosomal subunit.

Its function is as follows. This protein binds to the 23S rRNA, and is important in its secondary structure. It is located near the subunit interface in the base of the L7/L12 stalk, and near the tRNA binding site of the peptidyltransferase center. In Sodalis glossinidius (strain morsitans), this protein is Large ribosomal subunit protein uL6.